A 114-amino-acid polypeptide reads, in one-letter code: uncharacterized protein (114 aa).

Residues 1–114 (MSTAASSRMR…HASQSPDTAY (114 aa)) form a disordered region. Residues 32 to 43 (CRRVPSRPCRPV) are compositionally biased toward low complexity.

This is an uncharacterized protein from Human adenovirus B serotype 7 (HAdV-7).